The sequence spans 235 residues: Small ribosomal subunit protein eS4 (235 aa).

Residues 37–110 (LPLGLIIRDV…KGRLVLYKLN (74 aa)) enclose the S4 RNA-binding domain.

This sequence belongs to the eukaryotic ribosomal protein eS4 family.

This is Small ribosomal subunit protein eS4 from Methanosarcina mazei (strain ATCC BAA-159 / DSM 3647 / Goe1 / Go1 / JCM 11833 / OCM 88) (Methanosarcina frisia).